The chain runs to 461 residues: Bacterial E1-like protein BilD (461 aa).

Cys-385 serves as the catalytic Glycyl thioester intermediate.

Component of the Bil (bacterial ISG15-like) antiviral defense system, composed of BilA, BilB, BilC and BilD. The Bil system specifically conjugates a ubiquitin-like moiety (bilA) to the bacteriophage central tail fiber (CTF, or tip attachment protein J) via reactions involving E1 (bilD) and E2 (bilB). Modifies CTF of phage SECphi27 and SECphi4, which probably interferes with assembly of the phage tail. Also modifies T5 baseplate hub protein pb3 (gene D16), but not gp27 of phage T6 (Bil defends against T6). BilD (E1) catalyzes the first step in conjugation. Activates ubiquitin-like BilA by first adenylating its C-terminal glycine residue with ATP, and then conjugates it to the side chain of a cysteine residue in E1 (this protein), yielding a ubiquitin-E1 thioester and free AMP. Bil-encoding bacteria produce mostly defective phage SECphi27, many of which have phage assembly defects, including no tails. SECphi27 phage progeny produced in E.coli with the Bil system inject less DNA into naive host cells, maybe because the phage are less able to adsorb and inject their DNA into host cells. In terms of biological role, expression of the Bil system in E.coli (strain MG1655) confers about 100-fold resistance to phage SECphi27, SECphi18, SECphi6, SECphi4 and T5, but not to SECphi17. When cells expressing the Bil system are infected by phage SECphi27 at low multiplicity of infection (0.03 MOI) the culture survives, at 3.0 MOI the culture collapses at the same time as cells without the Bil system. This is Bacterial E1-like protein BilD from Collimonas sp. (strain OK412).